The sequence spans 48 residues: MKRTYQPSKLKRAKTHGFMARMATAQGRKVLRQRRFKNRAQLTVSSER.

The protein belongs to the bacterial ribosomal protein bL34 family.

The protein is Large ribosomal subunit protein bL34 (rpmH) of Mycoplasma genitalium (strain ATCC 33530 / DSM 19775 / NCTC 10195 / G37) (Mycoplasmoides genitalium).